The following is a 488-amino-acid chain: Palmitoleoyl-protein carboxylesterase notum1 (488 aa).

Residues Met1 to Gly20 form the signal peptide. The N-linked (GlcNAc...) asparagine glycan is linked to Asn90. Active-site charge relay system residues include Ser226, Asp334, and His383.

This sequence belongs to the pectinacetylesterase family. Notum subfamily. In terms of tissue distribution, expressed in the egg and through cleavage to gastrulation stages. Enriched in the animal (prospective ectoderm) and dorsal regions in early gastrula. Shows a dynamic expression during embryogenesis, in particular during neural induction and antero-posterior (AP) patterning.

The protein resides in the secreted. It carries out the reaction [Wnt protein]-O-(9Z)-hexadecenoyl-L-serine + H2O = [Wnt protein]-L-serine + (9Z)-hexadecenoate + H(+). Carboxylesterase that acts as a key negative regulator of the Wnt signaling pathway by specifically mediating depalmitoleoylation of WNT proteins. Serine palmitoleoylation of WNT proteins is required for efficient binding to frizzled receptors. Functions in the prospective ectoderm and is required for neural induction. This chain is Palmitoleoyl-protein carboxylesterase notum1, found in Xenopus laevis (African clawed frog).